A 393-amino-acid polypeptide reads, in one-letter code: Protein TsgA (393 aa).

The next 12 membrane-spanning stretches (helical) occupy residues 11–31 (WISFLSYALTGALVIVTGMVM), 51–71 (FLNAGILISIFLNAWLMEIVP), 78–98 (FGFILMVLAVAGLMFSHSLAL), 101–121 (AAMFVLGLVSGITMSIGTFLI), 134–154 (LLFTDSFFSMAGMIFPMVAAF), 162–182 (WYWVYACIGLVYLAIFILTFG), 206–226 (IGVLFLAVAALCYILGQLGFI), 245–265 (ALVSDFWMSYMFGMWAFSFIL), 273–293 (ILTVLAGMAAVLMYLFITGTQ), 298–318 (WFILTLGFFSSAIYTSIITLG), 332–352 (FILTCGTIGTMLTFVVTGPIV), and 361–381 (LLTANGLYAVVFVMCFALGFV).

This sequence belongs to the major facilitator superfamily. TsgA family.

It localises to the cell inner membrane. This chain is Protein TsgA, found in Salmonella dublin (strain CT_02021853).